A 201-amino-acid polypeptide reads, in one-letter code: Myelomonocytic growth factor (201 aa).

Residues 1-23 (MCCLTPVLALALVLGAPWQALHG) form the signal peptide. Intrachain disulfides connect Cys-61/Cys-67 and Cys-89/Cys-99. N-linked (GlcNAc...) asparagine glycans are attached at residues Asn-123 and Asn-137.

Belongs to the IL-6 superfamily.

The protein resides in the secreted. In terms of biological role, hematopoietic growth factor that stimulates the proliferation and colony formation of normal and transformed avian cells of the myeloid lineage. This Gallus gallus (Chicken) protein is Myelomonocytic growth factor.